Reading from the N-terminus, the 418-residue chain is Phospho-N-acetylmuramoyl-pentapeptide-transferase (418 aa).

Transmembrane regions (helical) follow at residues 22–42 (YISF…VLIG), 72–92 (TPTM…LLLA), 95–115 (SNIY…LGLI), 135–155 (IIAQ…SPNI), 208–228 (AATW…VSNG), 244–264 (AIIG…GFAA), 277–297 (LTVF…HNAF), 302–322 (FMGD…AIII), 326–346 (LLLP…MIQV), and 395–415 (KIVV…VVTL).

Belongs to the glycosyltransferase 4 family. MraY subfamily. Mg(2+) is required as a cofactor.

It is found in the cell inner membrane. The enzyme catalyses UDP-N-acetyl-alpha-D-muramoyl-L-alanyl-gamma-D-glutamyl-meso-2,6-diaminopimeloyl-D-alanyl-D-alanine + di-trans,octa-cis-undecaprenyl phosphate = di-trans,octa-cis-undecaprenyl diphospho-N-acetyl-alpha-D-muramoyl-L-alanyl-D-glutamyl-meso-2,6-diaminopimeloyl-D-alanyl-D-alanine + UMP. Its pathway is cell wall biogenesis; peptidoglycan biosynthesis. In terms of biological role, catalyzes the initial step of the lipid cycle reactions in the biosynthesis of the cell wall peptidoglycan: transfers peptidoglycan precursor phospho-MurNAc-pentapeptide from UDP-MurNAc-pentapeptide onto the lipid carrier undecaprenyl phosphate, yielding undecaprenyl-pyrophosphoryl-MurNAc-pentapeptide, known as lipid I. The chain is Phospho-N-acetylmuramoyl-pentapeptide-transferase from Azobacteroides pseudotrichonymphae genomovar. CFP2.